The chain runs to 379 residues: Cytochrome b (379 aa).

Helical transmembrane passes span Phe-33–Met-53, Trp-77–Ile-98, Trp-113–Leu-133, and Phe-178–Leu-198. Heme b-binding residues include His-83 and His-97. Heme b-binding residues include His-182 and His-196. A ubiquinone is bound at residue His-201. A run of 4 helical transmembrane segments spans residues Thr-226–Phe-246, Met-288–Gln-308, Ile-320–Gly-340, and Phe-347–Pro-367.

This sequence belongs to the cytochrome b family. The cytochrome bc1 complex contains 11 subunits: 3 respiratory subunits (MT-CYB, CYC1 and UQCRFS1), 2 core proteins (UQCRC1 and UQCRC2) and 6 low-molecular weight proteins (UQCRH/QCR6, UQCRB/QCR7, UQCRQ/QCR8, UQCR10/QCR9, UQCR11/QCR10 and a cleavage product of UQCRFS1). This cytochrome bc1 complex then forms a dimer. Heme b is required as a cofactor.

The protein resides in the mitochondrion inner membrane. Component of the ubiquinol-cytochrome c reductase complex (complex III or cytochrome b-c1 complex) that is part of the mitochondrial respiratory chain. The b-c1 complex mediates electron transfer from ubiquinol to cytochrome c. Contributes to the generation of a proton gradient across the mitochondrial membrane that is then used for ATP synthesis. This Dipodomys ordii (Ord's kangaroo rat) protein is Cytochrome b (MT-CYB).